A 344-amino-acid chain; its full sequence is Putative NAD(P)H nitroreductase MT3217 (344 aa).

FMN contacts are provided by residues 40–44 (QPWRW) and Arg-326.

Belongs to the nitroreductase family. As to quaternary structure, interacts with human TLR2. FMN is required as a cofactor.

Functionally, stimulates pro-inflammatory cytokine expression via TLR2 signaling pathway. Activation of TLR2 results in the phosphorylation and activation of NF-kappa-B. Also induces TLR2 expression. May influence the innate immune responses to facilitate the survival of M.tuberculosis in the granulomatous microenvironment. The polypeptide is Putative NAD(P)H nitroreductase MT3217 (Mycobacterium tuberculosis (strain CDC 1551 / Oshkosh)).